A 145-amino-acid polypeptide reads, in one-letter code: D-aminoacyl-tRNA deacylase (145 aa).

Positions 137–138 (GP) match the Gly-cisPro motif, important for rejection of L-amino acids motif.

Belongs to the DTD family. As to quaternary structure, homodimer.

The protein localises to the cytoplasm. The catalysed reaction is glycyl-tRNA(Ala) + H2O = tRNA(Ala) + glycine + H(+). It carries out the reaction a D-aminoacyl-tRNA + H2O = a tRNA + a D-alpha-amino acid + H(+). In terms of biological role, an aminoacyl-tRNA editing enzyme that deacylates mischarged D-aminoacyl-tRNAs. Also deacylates mischarged glycyl-tRNA(Ala), protecting cells against glycine mischarging by AlaRS. Acts via tRNA-based rather than protein-based catalysis; rejects L-amino acids rather than detecting D-amino acids in the active site. By recycling D-aminoacyl-tRNA to D-amino acids and free tRNA molecules, this enzyme counteracts the toxicity associated with the formation of D-aminoacyl-tRNA entities in vivo and helps enforce protein L-homochirality. The chain is D-aminoacyl-tRNA deacylase from Shewanella baltica (strain OS155 / ATCC BAA-1091).